Consider the following 195-residue polypeptide: Putative NADH dehydrogenase/NAD(P)H nitroreductase RSc1004 (195 aa).

The protein belongs to the nitroreductase family. HadB/RutE subfamily. The cofactor is FMN.

This is Putative NADH dehydrogenase/NAD(P)H nitroreductase RSc1004 from Ralstonia nicotianae (strain ATCC BAA-1114 / GMI1000) (Ralstonia solanacearum).